Here is a 130-residue protein sequence, read N- to C-terminus: Transcription antitermination protein NusB (130 aa).

It belongs to the NusB family.

Involved in transcription antitermination. Required for transcription of ribosomal RNA (rRNA) genes. Binds specifically to the boxA antiterminator sequence of the ribosomal RNA (rrn) operons. The protein is Transcription antitermination protein NusB of Bacillus cereus (strain B4264).